The following is a 274-amino-acid chain: Phosphatidylglycerol--prolipoprotein diacylglyceryl transferase (274 aa).

4 helical membrane passes run 24–44 (WYAL…RFLS), 60–80 (LLVW…VVFY), 96–116 (WHGG…TVLF), and 122–142 (LSVA…LFFG). A 1,2-diacyl-sn-glycero-3-phospho-(1'-sn-glycerol) is bound at residue Arg143. Helical transmembrane passes span 182–202 (ATLE…FTAL), 207–227 (GQII…AEFF), and 241–261 (VTMG…VFVV).

It belongs to the Lgt family.

The protein resides in the cell inner membrane. It catalyses the reaction L-cysteinyl-[prolipoprotein] + a 1,2-diacyl-sn-glycero-3-phospho-(1'-sn-glycerol) = an S-1,2-diacyl-sn-glyceryl-L-cysteinyl-[prolipoprotein] + sn-glycerol 1-phosphate + H(+). It functions in the pathway protein modification; lipoprotein biosynthesis (diacylglyceryl transfer). In terms of biological role, catalyzes the transfer of the diacylglyceryl group from phosphatidylglycerol to the sulfhydryl group of the N-terminal cysteine of a prolipoprotein, the first step in the formation of mature lipoproteins. This chain is Phosphatidylglycerol--prolipoprotein diacylglyceryl transferase, found in Rhodospirillum rubrum (strain ATCC 11170 / ATH 1.1.1 / DSM 467 / LMG 4362 / NCIMB 8255 / S1).